The following is a 90-amino-acid chain: Envelope protein US9 homolog (90 aa).

The Intravirion segment spans residues 1-63 (MEPLRLADAE…IRRRRRQTRA (63 aa)). Positions 12-13 (LL) match the Di-leucine internalization motif motif. The segment at 29 to 38 (EAYYTESDDE) is acidic. Residues 64 to 84 (AGFVAAFVLVALISGGLGALM) form a helical; Signal-anchor for type II membrane protein membrane-spanning segment. Residues 85–90 (CWLAYR) are Virion surface-facing.

This sequence belongs to the alphaherpesvirinae envelope protein US9 family. Post-translationally, phosphorylated on serines within the acidic cluster. Phosphorylation determines whether endocytosed viral US9 traffics to the trans-Golgi network or recycles to the cell membrane.

It localises to the virion membrane. The protein resides in the host Golgi apparatus membrane. Its subcellular location is the host smooth endoplasmic reticulum membrane. The protein localises to the host cell membrane. Functionally, essential for the anterograde spread of the infection throughout the host nervous system. Together with the gE/gI heterodimer, US9 is involved in the sorting and transport of viral structural components toward axon tips. This is Envelope protein US9 homolog from Cercopithecine herpesvirus 1 (CeHV-1).